The primary structure comprises 540 residues: Phosphoenolpyruvate carboxykinase (ATP) (540 aa).

The substrate site is built by Arg-67, Tyr-207, and Lys-213. ATP is bound by residues Lys-213, His-232, and 248–256 (GLSGTGKTT). Residues Lys-213 and His-232 each coordinate Mn(2+). Asp-269 contributes to the Mn(2+) binding site. ATP contacts are provided by residues Glu-297, Arg-333, 449–450 (RI), and Thr-455. A substrate-binding site is contributed by Arg-333.

This sequence belongs to the phosphoenolpyruvate carboxykinase (ATP) family. Monomer. The cofactor is Mn(2+).

It is found in the cytoplasm. It catalyses the reaction oxaloacetate + ATP = phosphoenolpyruvate + ADP + CO2. It participates in carbohydrate biosynthesis; gluconeogenesis. In terms of biological role, involved in the gluconeogenesis. Catalyzes the conversion of oxaloacetate (OAA) to phosphoenolpyruvate (PEP) through direct phosphoryl transfer between the nucleoside triphosphate and OAA. This is Phosphoenolpyruvate carboxykinase (ATP) from Aliivibrio fischeri (strain MJ11) (Vibrio fischeri).